Reading from the N-terminus, the 424-residue chain is Enolase (424 aa).

Residue Gln162 participates in (2R)-2-phosphoglycerate binding. Catalysis depends on Glu204, which acts as the Proton donor. The Mg(2+) site is built by Asp241, Glu284, and Asp311. Lys336, Arg365, Ser366, and Lys387 together coordinate (2R)-2-phosphoglycerate. Lys336 (proton acceptor) is an active-site residue.

The protein belongs to the enolase family. Requires Mg(2+) as cofactor.

The protein localises to the cytoplasm. The protein resides in the secreted. It is found in the cell surface. It carries out the reaction (2R)-2-phosphoglycerate = phosphoenolpyruvate + H2O. The protein operates within carbohydrate degradation; glycolysis; pyruvate from D-glyceraldehyde 3-phosphate: step 4/5. In terms of biological role, catalyzes the reversible conversion of 2-phosphoglycerate (2-PG) into phosphoenolpyruvate (PEP). It is essential for the degradation of carbohydrates via glycolysis. In Rhizobium etli (strain ATCC 51251 / DSM 11541 / JCM 21823 / NBRC 15573 / CFN 42), this protein is Enolase.